We begin with the raw amino-acid sequence, 171 residues long: Sec-independent protein translocase protein TatB (171 aa).

A helical membrane pass occupies residues 1–21 (MFDIGFSELLLVFIIGLVVLG). Residues 117-171 (KDNEAAHEGVTPAAAQTQASSPEQKPETTPEPVVKPAADAEPKTAAPSPSSSDKP) form a disordered region. A compositionally biased stretch (polar residues) spans 130-139 (AAQTQASSPE).

It belongs to the TatB family. As to quaternary structure, the Tat system comprises two distinct complexes: a TatABC complex, containing multiple copies of TatA, TatB and TatC subunits, and a separate TatA complex, containing only TatA subunits. Substrates initially bind to the TatABC complex, which probably triggers association of the separate TatA complex to form the active translocon.

The protein resides in the cell inner membrane. Its function is as follows. Part of the twin-arginine translocation (Tat) system that transports large folded proteins containing a characteristic twin-arginine motif in their signal peptide across membranes. Together with TatC, TatB is part of a receptor directly interacting with Tat signal peptides. TatB may form an oligomeric binding site that transiently accommodates folded Tat precursor proteins before their translocation. The polypeptide is Sec-independent protein translocase protein TatB (Escherichia coli O157:H7).